The primary structure comprises 396 residues: MAKAKFERTKPHVNVGTIGHVDHGKTTLTAALTKIGAERFGGEFKAYDAIDAAPEEKARGITISTAHVEYESPTRHYAHVDCPGHADYVKNMITGAAQMDGAILVCSAADGPMPQTREHILLSRQVGVPHIVVFLNKADMVDDAELLELVEMEVRELLSKYDFPGDDTPIIHGSARLALDGDQSDIGVPAILKLVEALDSFIPEPTRDVDRPFLMPVEDVFSISGRGTVVTGRIERGIIKVGDEIEIVGIRDTQKTTVTGVEMFRKLLDQGQAGDNAGLLLRGTKRDDVERGQVLCKPGSIKPHTEFEAEVYVLSKDEGGRHTPFFKGYRPQFYFRTTDITGACQLPEGVEMVMPGDNVKMVVTLINPVAMDEGLRFAIREGGRTVGAGVVAKIIK.

Residues 10–206 (KPHVNVGTIG…ALDSFIPEPT (197 aa)) form the tr-type G domain. Residues 19–26 (GHVDHGKT) form a G1 region. 19–26 (GHVDHGKT) contacts GTP. T26 contributes to the Mg(2+) binding site. The tract at residues 60–64 (GITIS) is G2. Residues 81-84 (DCPG) are G3. GTP contacts are provided by residues 81–85 (DCPGH) and 136–139 (NKAD). The G4 stretch occupies residues 136–139 (NKAD). Positions 174–176 (SAR) are G5.

Belongs to the TRAFAC class translation factor GTPase superfamily. Classic translation factor GTPase family. EF-Tu/EF-1A subfamily. In terms of assembly, monomer.

The protein resides in the cytoplasm. It catalyses the reaction GTP + H2O = GDP + phosphate + H(+). In terms of biological role, GTP hydrolase that promotes the GTP-dependent binding of aminoacyl-tRNA to the A-site of ribosomes during protein biosynthesis. This chain is Elongation factor Tu, found in Xanthomonas euvesicatoria pv. vesicatoria (strain 85-10) (Xanthomonas campestris pv. vesicatoria).